The primary structure comprises 150 residues: 6,7-dimethyl-8-ribityllumazine synthase (150 aa).

5-amino-6-(D-ribitylamino)uracil is bound by residues Phe-11, 43–45, and 67–69; these read VYD and AVI. Residue 72–73 participates in (2S)-2-hydroxy-3-oxobutyl phosphate binding; it reads AT. His-75 acts as the Proton donor in catalysis. Residue Leu-100 participates in 5-amino-6-(D-ribitylamino)uracil binding. (2S)-2-hydroxy-3-oxobutyl phosphate is bound at residue Arg-115.

Belongs to the DMRL synthase family.

The enzyme catalyses (2S)-2-hydroxy-3-oxobutyl phosphate + 5-amino-6-(D-ribitylamino)uracil = 6,7-dimethyl-8-(1-D-ribityl)lumazine + phosphate + 2 H2O + H(+). Its pathway is cofactor biosynthesis; riboflavin biosynthesis; riboflavin from 2-hydroxy-3-oxobutyl phosphate and 5-amino-6-(D-ribitylamino)uracil: step 1/2. Its function is as follows. Catalyzes the formation of 6,7-dimethyl-8-ribityllumazine by condensation of 5-amino-6-(D-ribitylamino)uracil with 3,4-dihydroxy-2-butanone 4-phosphate. This is the penultimate step in the biosynthesis of riboflavin. In Pyrobaculum neutrophilum (strain DSM 2338 / JCM 9278 / NBRC 100436 / V24Sta) (Thermoproteus neutrophilus), this protein is 6,7-dimethyl-8-ribityllumazine synthase.